The following is a 152-amino-acid chain: Protein-export protein SecB (152 aa).

It belongs to the SecB family. Homotetramer, a dimer of dimers. One homotetramer interacts with 1 SecA dimer.

It is found in the cytoplasm. In terms of biological role, one of the proteins required for the normal export of preproteins out of the cell cytoplasm. It is a molecular chaperone that binds to a subset of precursor proteins, maintaining them in a translocation-competent state. It also specifically binds to its receptor SecA. In Rickettsia akari (strain Hartford), this protein is Protein-export protein SecB.